Consider the following 424-residue polypeptide: Cysteate synthase (424 aa).

Lys106 carries the N6-(pyridoxal phosphate)lysine modification. Pyridoxal 5'-phosphate contacts are provided by Asn132 and Thr381.

Belongs to the threonine synthase family. Cysteate synthase subfamily. As to quaternary structure, homotrimer. Pyridoxal 5'-phosphate is required as a cofactor.

It carries out the reaction O-phospho-L-serine + sulfite + H(+) = L-cysteate + phosphate. It participates in cofactor biosynthesis; coenzyme M biosynthesis. In terms of biological role, specifically catalyzes the beta-elimination of phosphate from L-phosphoserine and the beta-addition of sulfite to the dehydroalanine intermediate to produce L-cysteate. The protein is Cysteate synthase of Methanoregula boonei (strain DSM 21154 / JCM 14090 / 6A8).